A 571-amino-acid chain; its full sequence is Optineurin (571 aa).

2 disordered regions span residues 1–32 and 100–144; these read MSHQ…HPNL and LSHE…DQLR. A coiled-coil region spans residues 38–170; sequence EELLQQMKEL…VSELQLKLNS (133 aa). An interaction with Rab8 region spans residues 58–209; sequence MKLNNQAMKG…GPTRTVSIGT (152 aa). Positions 100-143 are enriched in basic and acidic residues; that stretch reads LSHENEKLKEELGKLKGKSERSSEDPTDDSRLPRAEAEQEKDQL. An LIR motif is present at residues 176-181; sequence DSFVEI. Position 177 is a phosphoserine; by TBK1 (Ser177). Positions 186–197 are enriched in basic and acidic residues; it reads GEAEGSVKEIKH. Disordered regions lie at residues 186 to 210 and 255 to 291; these read GEAE…IGTS and VSDF…TVGS. Ser198 is modified (phosphoserine). Over residues 201–210 the composition is skewed to polar residues; that stretch reads PTRTVSIGTS. Positions 233-502 form a coiled coil; the sequence is CLREGNQKVE…LLKENDAFED (270 aa). Composition is skewed to basic and acidic residues over residues 255–268 and 275–286; these read VSDF…RSEI and STEKENEEEKGP. Position 336 is a phosphoserine (Ser336). An interaction with HD region spans residues 405–571; sequence TRKESEKVDR…LQIHVMDCII (167 aa). The interval 406 to 514 is interaction with MYO6; sequence RKESEKVDRA…RQSLMEMQSR (109 aa). A UBAN motif is present at residues 468 to 473; it reads DFHAER. A Phosphoserine modification is found at Ser520. Residues 541–571 form a CCHC NOA-type zinc finger; the sequence is QRNIPIHSCPKCGEVLPDIDTLQIHVMDCII. Residues Cys549, Cys552, His565, and Cys569 each coordinate Zn(2+).

In terms of assembly, self-associates. Interacts with HD. Interacts with GTF3A. Interacts with MYO6. Interacts (via UBAN) with ubiquitinated TFRC. Interacts with GTP-bound Rab8 (RAB8A and/or RAB8B). Interacts with TBC1D17. Interacts with TBK1. Interacts with TRAF3. Binds to linear ubiquitin chains. Interacts with LC3 family members MAP1LC3A, MAP1LC3B, GABARAP, GABARAPL1 and GABARAPL2; OPTN phosphorylation increases the association (at least with MAP1LC3B). Interacts with RAB12; the interaction may be indirect. Interacts with TBK1; this interaction leads to the Golgi localization of TBK1 and its subsequent activation. Interacts with palmitoyltransferase ZDHHC17/HIP14; the interaction does not lead to palmitoylation of OPTN. Interacts with CYLD. Interacts with TOM1; the interaction is indirect and is mediated by MYO6, which acts as a bridge between TOM1 and OPTN. Interacts with USP12; the interaction is independent of USP12 deubiquitinase activity and may be involved in regulation of autophagic flux. Phosphorylated by TBK1, leading to restrict bacterial proliferation in case of infection. Present in aqueous humor of the eye (at protein level).

Its subcellular location is the cytoplasm. It localises to the perinuclear region. The protein localises to the golgi apparatus. The protein resides in the trans-Golgi network. It is found in the cytoplasmic vesicle. Its subcellular location is the autophagosome. It localises to the recycling endosome. Functionally, plays an important role in the maintenance of the Golgi complex, in membrane trafficking, in exocytosis, through its interaction with myosin VI and Rab8. Links myosin VI to the Golgi complex and plays an important role in Golgi ribbon formation. Negatively regulates the induction of IFNB in response to RNA virus infection. Plays a neuroprotective role in the eye and optic nerve. Probably part of the TNF-alpha signaling pathway that can shift the equilibrium toward induction of cell death. May act by regulating membrane trafficking and cellular morphogenesis via a complex that contains Rab8 and huntingtin (HD). Mediates the interaction of Rab8 with the probable GTPase-activating protein TBC1D17 during Rab8-mediated endocytic trafficking, such as that of transferrin receptor (TFRC/TfR); regulates Rab8 recruitment to tubules emanating from the endocytic recycling compartment. Autophagy receptor that interacts directly with both the cargo to become degraded and an autophagy modifier of the MAP1 LC3 family; targets ubiquitin-coated bacteria (xenophagy) and appears to function in the same pathway as SQSTM1 and CALCOCO2/NDP52. This chain is Optineurin (OPTN), found in Macaca mulatta (Rhesus macaque).